Here is a 72-residue protein sequence, read N- to C-terminus: Translation initiation factor IF-1 (72 aa).

The S1-like domain occupies 2-72; sequence AKEDCIEMQG…NKGRIIFRSR (71 aa).

This sequence belongs to the IF-1 family. In terms of assembly, component of the 30S ribosomal translation pre-initiation complex which assembles on the 30S ribosome in the order IF-2 and IF-3, IF-1 and N-formylmethionyl-tRNA(fMet); mRNA recruitment can occur at any time during PIC assembly.

Its subcellular location is the cytoplasm. Its function is as follows. One of the essential components for the initiation of protein synthesis. Stabilizes the binding of IF-2 and IF-3 on the 30S subunit to which N-formylmethionyl-tRNA(fMet) subsequently binds. Helps modulate mRNA selection, yielding the 30S pre-initiation complex (PIC). Upon addition of the 50S ribosomal subunit IF-1, IF-2 and IF-3 are released leaving the mature 70S translation initiation complex. The protein is Translation initiation factor IF-1 of Pasteurella multocida (strain Pm70).